The primary structure comprises 515 residues: Centromere protein T (515 aa).

Disordered regions lie at residues 24-156 and 271-411; these read ADSR…KRKQ and LSGK…DPHK. The segment covering 29–44 has biased composition (basic residues); it reads PMRRRSTRINAQRRRS. A compositionally biased stretch (polar residues) spans 45–58; that stretch reads QTPYSNRQGSQTKT. Position 86 is a phosphothreonine (T86). The interval 94 to 375 is flexible stalk domain; that stretch reads ILLTAPESST…DSLPAEQPPP (282 aa). Residues 296-306 are compositionally biased toward polar residues; that stretch reads SSGTRLQSRMS. Phosphoserine occurs at positions 313, 333, 345, 346, 357, and 376.

The protein belongs to the CENP-T/CNN1 family. Component of the CENPA-CAD complex, composed of CENPI, CENPK, CENPL, CENPO, CENPP, CENPQ, CENPR and CENPS. The CENPA-CAD complex is probably recruited on centromeres by the CENPA-NAC complex, at least composed of CENPA, CENPC, CENPH, CENPM, CENPN, CENPT and CENPU. Identified in a centromeric complex containing histones H2A, H2B, H3 and H4, and at least CENPA, CENPB, CENPC, CENPT, CENPN, HJURP, SUPT16H, SSRP1 and RSF1. Interacts (via N-terminus) with the NDC80 complex. Heterodimer with CENPW; this dimer coassembles with CENPS-CENPX heterodimers at centromeres to form the tetrameric CENP-T-W-S-X complex. Dynamically phosphorylated during the cell cycle. Phosphorylated during G2 phase, metaphase and anaphase, but not during telophase or G1 phase.

It localises to the nucleus. The protein resides in the chromosome. Its subcellular location is the centromere. It is found in the kinetochore. In terms of biological role, component of the CENPA-NAC (nucleosome-associated) complex, a complex that plays a central role in assembly of kinetochore proteins, mitotic progression and chromosome segregation. The CENPA-NAC complex recruits the CENPA-CAD (nucleosome distal) complex and may be involved in incorporation of newly synthesized CENPA into centromeres. Part of a nucleosome-associated complex that binds specifically to histone H3-containing nucleosomes at the centromere, as opposed to nucleosomes containing CENPA. Component of the heterotetrameric CENP-T-W-S-X complex that binds and supercoils DNA, and plays an important role in kinetochore assembly. CENPT has a fundamental role in kinetochore assembly and function. It is one of the inner kinetochore proteins, with most further proteins binding downstream. Required for normal chromosome organization and normal progress through mitosis. The protein is Centromere protein T (Cenpt) of Mus musculus (Mouse).